A 209-amino-acid chain; its full sequence is COP9 signalosome complex subunit 8 (209 aa).

Positions 8-179 (DNAFSFRKLL…GTLDVSLNRF (172 aa)) constitute a PCI domain. Position 175 is a phosphoserine (Ser-175).

Belongs to the CSN8 family. In terms of assembly, component of the CSN complex, composed of COPS1/GPS1, COPS2, COPS3, COPS4, COPS5, COPS6, COPS7 (COPS7A or COPS7B), COPS8 and COPS9. In the complex, it probably interacts directly with COPS3, COPS4 and COPS7 (COPS7A or COPS7B). In terms of tissue distribution, widely expressed.

The protein localises to the cytoplasm. It is found in the nucleus. Functionally, component of the COP9 signalosome complex (CSN), a complex involved in various cellular and developmental processes. The CSN complex is an essential regulator of the ubiquitin (Ubl) conjugation pathway by mediating the deneddylation of the cullin subunits of SCF-type E3 ligase complexes, leading to decrease the Ubl ligase activity of SCF-type complexes such as SCF, CSA or DDB2. The complex is also involved in phosphorylation of p53/TP53, c-jun/JUN, IkappaBalpha/NFKBIA, ITPK1 and IRF8/ICSBP, possibly via its association with CK2 and PKD kinases. CSN-dependent phosphorylation of TP53 and JUN promotes and protects degradation by the Ubl system, respectively. The protein is COP9 signalosome complex subunit 8 (Cops8) of Mus musculus (Mouse).